The following is a 213-amino-acid chain: MQAYQRDFIRFAIERGVLRFGEFTLKSGRTSPYFFNAGLFDSGLALARLGRFYAEAVIDSGIDFDVLFGPAYKGIPLAATTAVALAEQHQRDLPWCFNRKEAKDHGEGGTLVGAPLSGRVLIIDDVITAGTAIREVMQIIDAQGARAAGVLIALNRQERGKGELSAIQEVERDFGMPVVSIVSLEQVLEYLAEDAELKKHLPAVEAYRAQYGI.

K26 lines the 5-phospho-alpha-D-ribose 1-diphosphate pocket. Residue F34–F35 coordinates orotate. Residues Y72–K73, R99, K100, K103, H105, and D124–A132 contribute to the 5-phospho-alpha-D-ribose 1-diphosphate site. Orotate contacts are provided by T128 and R156.

Belongs to the purine/pyrimidine phosphoribosyltransferase family. PyrE subfamily. In terms of assembly, homodimer. It depends on Mg(2+) as a cofactor.

The enzyme catalyses orotidine 5'-phosphate + diphosphate = orotate + 5-phospho-alpha-D-ribose 1-diphosphate. It functions in the pathway pyrimidine metabolism; UMP biosynthesis via de novo pathway; UMP from orotate: step 1/2. Its function is as follows. Catalyzes the transfer of a ribosyl phosphate group from 5-phosphoribose 1-diphosphate to orotate, leading to the formation of orotidine monophosphate (OMP). The chain is Orotate phosphoribosyltransferase from Pseudomonas aeruginosa (strain UCBPP-PA14).